Reading from the N-terminus, the 197-residue chain is MPLPRAAFLLGLLLAAAAAESVRETETMDARWLDNVGSGDLPDDEDIGEFTPHLTSDEFDIDDTSGSGDYSDYDDAIYLTTVDTPAISDNYIPGDTERKMEGEKKNTMLDNEIIPDKASPVEANLSNKISMASTANSSIFERTEVLTALIAGGAVGLLFAVFLILLLVYRMKKKDEGSYDLGKKPIYKKAPTNEFYA.

A signal peptide spans methionine 1 to alanine 19. The Extracellular segment spans residues glutamate 20–threonine 147. Serine 38, serine 65, and serine 67 each carry an O-linked (Xyl...) (glycosaminoglycan) serine glycan. N-linked (GlcNAc...) asparagine glycosylation is found at asparagine 124 and asparagine 136. Residues alanine 148–valine 168 form a helical membrane-spanning segment. The Cytoplasmic segment spans residues tyrosine 169–alanine 197.

This sequence belongs to the syndecan proteoglycan family. In terms of assembly, interacts with SDOS. In terms of processing, O-glycosylated; contains both chondroitin sulfate and heparan sulfate. Ser-38, Ser-65 and Ser-67 can all be modified by either chondroitin sulfate or heparan sulfate, and the protein exists in forms that contain only chondroitin sulfate, only heparan sulfate and both chondroitin sulfate and heparan sulfate.

The protein localises to the membrane. Functionally, cell surface proteoglycan which regulates exosome biogenesis in concert with SDCBP and PDCD6IP. This is Syndecan-4 (SDC4) from Gallus gallus (Chicken).